Here is a 182-residue protein sequence, read N- to C-terminus: Small ribosomal subunit protein uS4c (182 aa).

The region spanning 82–143 (MRLDNILFRL…KERSKVLIQN (62 aa)) is the S4 RNA-binding domain.

The protein belongs to the universal ribosomal protein uS4 family. Part of the 30S ribosomal subunit. Contacts protein S5. The interaction surface between S4 and S5 is involved in control of translational fidelity.

It is found in the plastid. It localises to the chloroplast. Functionally, one of the primary rRNA binding proteins, it binds directly to 16S rRNA where it nucleates assembly of the body of the 30S subunit. In terms of biological role, with S5 and S12 plays an important role in translational accuracy. The polypeptide is Small ribosomal subunit protein uS4c (rps4) (Neomarica sp. (strain Lejeune 1997)).